We begin with the raw amino-acid sequence, 300 residues long: Ubiquitin carboxyl-terminal hydrolase 2 (300 aa).

A UCH catalytic domain is found at 2–220 (SWTTIESDAG…IRFNLMVICK (219 aa)). The active-site Nucleophile is Cys83. The active-site Proton donor is His159. Residues 261 to 290 (NFVGLFVELSKLLVKDRIDKNTWNSTLETA) enclose the ULD domain.

It belongs to the peptidase C12 family. In terms of assembly, component of the 26S proteasome. Interacts with rpn10.

The protein localises to the nucleus. The enzyme catalyses Thiol-dependent hydrolysis of ester, thioester, amide, peptide and isopeptide bonds formed by the C-terminal Gly of ubiquitin (a 76-residue protein attached to proteins as an intracellular targeting signal).. In terms of biological role, ubiquitin-protein hydrolase is involved both in the processing of ubiquitin precursors and of ubiquitinated proteins. This enzyme is a thiol protease that recognizes and hydrolyzes a peptide bond at the C-terminal glycine of ubiquitin. This chain is Ubiquitin carboxyl-terminal hydrolase 2 (uch2), found in Schizosaccharomyces pombe (strain 972 / ATCC 24843) (Fission yeast).